The primary structure comprises 428 residues: Enolase (428 aa).

Glutamine 163 contributes to the (2R)-2-phosphoglycerate binding site. The active-site Proton donor is glutamate 205. The Mg(2+) site is built by aspartate 242, glutamate 283, and aspartate 310. (2R)-2-phosphoglycerate-binding residues include lysine 335, arginine 364, serine 365, and lysine 386. Lysine 335 functions as the Proton acceptor in the catalytic mechanism.

This sequence belongs to the enolase family. Mg(2+) is required as a cofactor.

It is found in the cytoplasm. The protein resides in the secreted. Its subcellular location is the cell surface. The catalysed reaction is (2R)-2-phosphoglycerate = phosphoenolpyruvate + H2O. The protein operates within carbohydrate degradation; glycolysis; pyruvate from D-glyceraldehyde 3-phosphate: step 4/5. Catalyzes the reversible conversion of 2-phosphoglycerate (2-PG) into phosphoenolpyruvate (PEP). It is essential for the degradation of carbohydrates via glycolysis. This Streptomyces avermitilis (strain ATCC 31267 / DSM 46492 / JCM 5070 / NBRC 14893 / NCIMB 12804 / NRRL 8165 / MA-4680) protein is Enolase.